We begin with the raw amino-acid sequence, 35 residues long: Photosystem II reaction center protein T (35 aa).

The chain crosses the membrane as a helical span at residues 3–23; it reads ALVYTFLLVSTLGIIFFAIFF.

It belongs to the PsbT family. In terms of assembly, PSII is composed of 1 copy each of membrane proteins PsbA, PsbB, PsbC, PsbD, PsbE, PsbF, PsbH, PsbI, PsbJ, PsbK, PsbL, PsbM, PsbT, PsbY, PsbZ, Psb30/Ycf12, at least 3 peripheral proteins of the oxygen-evolving complex and a large number of cofactors. It forms dimeric complexes.

It localises to the plastid. Its subcellular location is the chloroplast thylakoid membrane. Functionally, found at the monomer-monomer interface of the photosystem II (PS II) dimer, plays a role in assembly and dimerization of PSII. PSII is a light-driven water plastoquinone oxidoreductase, using light energy to abstract electrons from H(2)O, generating a proton gradient subsequently used for ATP formation. In Ceratophyllum demersum (Rigid hornwort), this protein is Photosystem II reaction center protein T.